Reading from the N-terminus, the 1707-residue chain is Replicase large subunit (1707 aa).

Residues 65–425 are methyltransferase; it reads HEVLSQKEQN…INGAAVKNKQ (361 aa). An Alphavirus-like MT domain is found at 86–300; that stretch reads VFKDDKNMVH…HDWEEYKKYL (215 aa). Residues 601-622 adopt a coiled-coil conformation; sequence DLSEVKAKSDKLLQQKKEIADE. The region spanning 872–1033 is the (+)RNA virus helicase ATP-binding domain; that stretch reads CDQTYLCNNR…VGKFDIVTEK (162 aa). Positions 901 to 1155 are helicase; the sequence is LVDGVPGCGK…SRHTQSLVYE (255 aa). In terms of domain architecture, (+)RNA virus helicase C-terminal spans 1034-1187; the sequence is RETYRSPADV…ARFFVTETVL (154 aa). In terms of domain architecture, RdRp catalytic spans 1449-1562; sequence YDFVEIDMSK…AFPRGTQFVD (114 aa).

The protein belongs to the ssRNA positive-strand viruses RNA-directed RNA polymerase family. Heterodimer of a large and a small subunit.

It catalyses the reaction ATP + H2O = ADP + phosphate + H(+). It carries out the reaction RNA(n) + a ribonucleoside 5'-triphosphate = RNA(n+1) + diphosphate. In terms of biological role, is an RNA-dependent RNA polymerase active in viral RNA replication. Is a methyltransferase active in RNA capping and an RNA helicase. Methyltransferase displays a cytoplasmic capping enzyme activity. This function is necessary since all viral RNAs are synthesized in the cytoplasm, and host capping enzymes are restricted to the nucleus. Helicase region probably exhibits NTPase and RNA unwinding activities (Potential). This is Replicase large subunit from Tobacco rattle virus (isolate PpK20) (TRV).